Consider the following 227-residue polypeptide: MQHDVYDYTAHTVSKNTVLQKTYRLLGFSFIPASAGAALAANAGFNFYAAFGSRWIGFAVVLAFFYGMIHFIEKNRYSNTGVTLLMVFTFGMGVLIGPVLQYALHIADGAKIVGIAAAMTAAVFLTMSALARRTRLDMNALGRFLTVGAVILMVAVVANLFLGIPALALTISAGFVLFSSLMIMWQVRTVIDGGEDSHISAALTLFISLYNIFSSLLNILLSLNGED.

7 consecutive transmembrane segments (helical) span residues 25-45 (LLGF…NAGF), 49-69 (AAFG…YGMI), 80-100 (TGVT…GPVL), 111-131 (KIVG…SALA), 144-164 (FLTV…FLGI), 165-185 (PALA…MIMW), and 201-221 (AALT…NILL).

The protein localises to the cell membrane. This is an uncharacterized protein from Neisseria meningitidis serogroup B (strain ATCC BAA-335 / MC58).